The primary structure comprises 241 residues: Small ribosomal subunit protein uS3 (241 aa).

Residues 39 to 108 (IREGVLKLLK…NLKVEVKVIE (70 aa)) enclose the KH type-2 domain. Positions 215 to 241 (SQRVSEKAPMNNDRRFNNKNNNRGGRK) are disordered. Residues 232–241 (NKNNNRGGRK) show a composition bias toward low complexity.

It belongs to the universal ribosomal protein uS3 family. As to quaternary structure, part of the 30S ribosomal subunit. Forms a tight complex with proteins S10 and S14.

Functionally, binds the lower part of the 30S subunit head. Binds mRNA in the 70S ribosome, positioning it for translation. The chain is Small ribosomal subunit protein uS3 from Mesoplasma florum (Acholeplasma florum).